The primary structure comprises 1883 residues: DDB1- and CUL4-associated factor homolog 1 (1883 aa).

Disordered regions lie at residues 1–47 (MDGQ…QSVE) and 309–340 (KPGDDNSVRDDPSRHRLNRSKSRGRGRVHEGA). Over residues 37 to 47 (NPEEGEEQSVE) the composition is skewed to acidic residues. A compositionally biased stretch (basic and acidic residues) spans 309 to 322 (KPGDDNSVRDDPSR). The span at 323–334 (HRLNRSKSRGRG) shows a compositional bias: basic residues. Serine 349 is subject to Phosphoserine. The interval 882 to 924 (NKPPLAQNHQPVPGQATTRPSTDVAVGTQSTGNAPQTPVAPAS) is disordered. The segment covering 888 to 917 (QNHQPVPGQATTRPSTDVAVGTQSTGNAPQ) has biased composition (polar residues). Residues 1087-1119 (DSKELLLLIHEHLQASGLGDTASALLKEAQLTP) form the LisH domain. Disordered stretches follow at residues 1157 to 1202 (TSKP…QWPS), 1214 to 1260 (PKIN…ALPQ), and 1310 to 1377 (SELR…NPER). Over residues 1238 to 1251 (LTFSPSFSSQSRKQ) the composition is skewed to low complexity. A compositionally biased stretch (basic and acidic residues) spans 1310-1329 (SELRDSSVPGKRIDLGERRN). A compositionally biased stretch (polar residues) spans 1330–1362 (STFADGSGLQTPASALDANQSGSSRLGQMTPAS). WD repeat units follow at residues 1464–1503 (DETALFTCIALLGGTNHIAVGSHAGEIKIFEASSGSMLES), 1506–1546 (GHQA…GGPR), 1548–1586 (SFDGCKAAKFSNSGLQFAALSCEASRKDVLLYDVQTCSP), 1587–1626 (CQKLTDTVTSSRSNPYSLVHFSPCDTLILWNGVLWDRRIP), and 1633–1671 (DQFTDYGGGGFHPSRNEVIINSEIWDMRTFKLLRSVPSL). 2 consecutive short sequence motifs (DWD box) follow at residues 1619 to 1626 (VLWDRRIP) and 1655 to 1662 (EIWDMRTF). Residues 1763-1883 (YEIGRRRPTD…DDYRDNIRSS (121 aa)) are disordered. Composition is skewed to acidic residues over residues 1773–1796 (DDSDPDDDDETEDEDEDDEEEDDL) and 1808–1864 (DSGD…DGEM).

Belongs to the VPRBP/DCAF1 family. As to quaternary structure, component of the CUL4-RBX1-DDB1-DCAF1 E3 ubiquitin-protein ligase complex. Interacts with DDB1A through its DWD motifs. In terms of tissue distribution, ubiquitous but predominantly expressed in the inflorescence and roots.

The protein localises to the nucleus. The protein operates within protein modification; protein ubiquitination. Its function is as follows. Component of the CUL4-RBX1-DDB1-DCAF1 E3 ubiquitin-protein ligase complex, DCAF1 may function as the substrate recognition module within this complex. Appears to be required for plant embryogenesis and to affect several other developmental processes including leaf, shoot, and flower development. The sequence is that of DDB1- and CUL4-associated factor homolog 1 (DCAF1) from Arabidopsis thaliana (Mouse-ear cress).